The following is a 294-amino-acid chain: 4-hydroxy-tetrahydrodipicolinate synthase (294 aa).

Pyruvate is bound at residue T44. Residue Y132 is the Proton donor/acceptor of the active site. Catalysis depends on K161, which acts as the Schiff-base intermediate with substrate. Residue I206 coordinates pyruvate.

This sequence belongs to the DapA family. In terms of assembly, homotetramer; dimer of dimers.

It is found in the cytoplasm. It carries out the reaction L-aspartate 4-semialdehyde + pyruvate = (2S,4S)-4-hydroxy-2,3,4,5-tetrahydrodipicolinate + H2O + H(+). It participates in amino-acid biosynthesis; L-lysine biosynthesis via DAP pathway; (S)-tetrahydrodipicolinate from L-aspartate: step 3/4. Functionally, catalyzes the condensation of (S)-aspartate-beta-semialdehyde [(S)-ASA] and pyruvate to 4-hydroxy-tetrahydrodipicolinate (HTPA). The chain is 4-hydroxy-tetrahydrodipicolinate synthase from Thermotoga neapolitana (strain ATCC 49049 / DSM 4359 / NBRC 107923 / NS-E).